A 185-amino-acid chain; its full sequence is Kappa-casein (185 aa).

The first 20 residues, 1–20, serve as a signal peptide directing secretion; the sequence is MKSFFLVVNILALTLPFLGA. Thr-143 is a glycosylation site (O-linked (GalNAc...) threonine). Residue Ser-161 is modified to Phosphoserine; alternate. Residue Ser-161 is glycosylated (O-linked (GalNAc...) serine; alternate). An O-linked (GalNAc...) threonine glycan is attached at Thr-178. Ser-179 bears the Phosphoserine mark.

The protein belongs to the kappa-casein family. As to expression, mammary gland specific. Secreted in milk.

It localises to the secreted. Kappa-casein stabilizes micelle formation, preventing casein precipitation in milk. The chain is Kappa-casein (CSN3) from Equus caballus (Horse).